The sequence spans 435 residues: Gamma-glutamyl phosphate reductase (435 aa).

Belongs to the gamma-glutamyl phosphate reductase family.

It is found in the cytoplasm. The enzyme catalyses L-glutamate 5-semialdehyde + phosphate + NADP(+) = L-glutamyl 5-phosphate + NADPH + H(+). Its pathway is amino-acid biosynthesis; L-proline biosynthesis; L-glutamate 5-semialdehyde from L-glutamate: step 2/2. Its function is as follows. Catalyzes the NADPH-dependent reduction of L-glutamate 5-phosphate into L-glutamate 5-semialdehyde and phosphate. The product spontaneously undergoes cyclization to form 1-pyrroline-5-carboxylate. In Xylella fastidiosa (strain M12), this protein is Gamma-glutamyl phosphate reductase.